A 518-amino-acid chain; its full sequence is MVRSGKNGDLHLKQIAYYKRTGEYHPTTLPSERSGIRRAAKKFVFKEKKLFYVGKDRKQNRLVVVSEEEKKKVLRECHENGPGVHHGISRTLTLVESGYYWTSVTNDVKQWVYACQHCQVAKNTVIVAPQQHLPMVGNPWSVVTVDLMGPFHTSNRSHVYAIIMTDLFTKWVMILPLCDVSASEISKAIINIFFLYGPPQKIIMDQRDEFIEQINVELYRLFGAKEIVISRASGSVNPAENTPSTIKTFLSKHCADHPNSWDEHLPALSFAFNVTHLEPNKNTPYFQMFNRNPCVLECPPEEGSEGTSVFARIVAAIREADGVVENKTPASSQMENNNSDELSKSKVVKKKAKQLNPFHLKVGHEVLRQRKNWWKDGRFQSEWVGPCVIDYITESGCAVLRDNTGTRLKRPIKMSHLRPYVRESSEQDSLYLLQGSIVADHDYIGLPEIPVGTYQANILVEDATIGIADNELLISSKDHELLEYRNSKISALVEDHSSLEKQTFSLLDSSNQVLEYLS.

The region spanning 130-292 (QQHLPMVGNP…TPYFQMFNRN (163 aa)) is the Integrase catalytic domain. Position 498 is a phosphoserine (Ser498).

This Mus musculus (Mouse) protein is Gypsy retrotransposon integrase-like protein 1 (Gin1).